The chain runs to 280 residues: DegV domain-containing protein M6_Spy1440 (280 aa).

In terms of domain architecture, DegV spans 3 to 280 (WKIVTDSGCD…DGGLLMGYEI (278 aa)). Ser63 and Ser91 together coordinate hexadecanoate.

Its function is as follows. May bind long-chain fatty acids, such as palmitate, and may play a role in lipid transport or fatty acid metabolism. This is DegV domain-containing protein M6_Spy1440 from Streptococcus pyogenes serotype M6 (strain ATCC BAA-946 / MGAS10394).